We begin with the raw amino-acid sequence, 67 residues long: Preprofallaxidin-4 (67 aa).

The first 22 residues, 1 to 22 (MASLKKFLFLVLFLGMVSLSIC), serve as a signal peptide directing secretion. Positions 23-46 (DKEKREGENEEEEEEHEEESEEKR) are excised as a propeptide. Residues 24–48 (KEKREGENEEEEEEHEEESEEKRGL) form a disordered region. The segment covering 30-42 (ENEEEEEEHEEES) has biased composition (acidic residues).

Belongs to the frog skin active peptide (FSAP) family. Dermaseptin subfamily. In terms of tissue distribution, expressed by the skin glands.

The protein localises to the secreted. In Litoria fallax (Eastern dwarf tree frog), this protein is Preprofallaxidin-4.